The primary structure comprises 2376 residues: Reducing polyketide synthase DEP5 (2376 aa).

The Ketosynthase family 3 (KS3) domain maps to 47 to 477 (LEPIAVVGMG…GTNAHTIIES (431 aa)). Residues cysteine 221, histidine 358, and histidine 399 each act as for beta-ketoacyl synthase activity in the active site. The interval 593–906 (VFTGQGAQWA…QYLPTLVRGF (314 aa)) is malonyl-CoA:ACP transacylase (MAT) domain. Serine 685 (for malonyltransferase activity) is an active-site residue. The interval 983–1121 (HDVLGQLTTG…GSIAIRTSAR (139 aa)) is N-terminal hotdog fold. Positions 983–1158 (HDVLGQLTTG…FNYGPTFQDM (176 aa)) are dehydratase (DH) domain. Positions 983–1286 (HDVLGQLTTG…CIAYEAAIPQ (304 aa)) constitute a PKS/mFAS DH domain. Histidine 1015 serves as the catalytic Proton acceptor; for dehydratase activity. The C-terminal hotdog fold stretch occupies residues 1131-1286 (LPQRASGRLW…CIAYEAAIPQ (156 aa)). Aspartate 1195 serves as the catalytic Proton donor; for dehydratase activity. An enoyl reductase (ER) domain region spans residues 1659–1964 (GRIQAGKVVF…DSICDNKIVI (306 aa)). A ketoreductase (KR) domain region spans residues 1988-2163 (ATYLLVGCLG…KPACAVVLPM (176 aa)). A Carrier domain is found at 2289-2368 (DLVRDHFIAK…KFSELVCGAQ (80 aa)). Residue serine 2327 is modified to O-(pantetheine 4'-phosphoryl)serine.

It functions in the pathway polyketide biosynthesis. Its function is as follows. Reducing polyketide synthase; part of the gene cluster that mediates the biosynthesis of depudecin, a highly oxidized eleven-carbon linear polyketide that acts as a histone deacetylase (HDAC) inhibitor and makes a small contribution to pathogenesis. The reducing polyketide synthase DEP5 is the central enzyme in depudecin biosynthesis by yielding the backbone polyketide chain. The monooxygenases DEP2 and DEP4, as well as the uncharacterized protein DEP1, then act as tailoring enzymes to modify the intermediate polyketide chain into depudecin. The protein is Reducing polyketide synthase DEP5 of Alternaria brassicicola (Dark leaf spot agent).